The following is a 1163-amino-acid chain: GTPase-activating protein (1163 aa).

C2 domains are found at residues 26–148 (PSSN…DHWF) and 261–419 (TTST…SAWY). Positions 520–737 (ERIAPIIKAL…DAVKHFLEVI (218 aa)) constitute a Ras-GAP domain. The PH domain maps to 762–860 (LKEGLMTKYP…WFDLLHKICL (99 aa)). Residues 862–898 (NSIRMQYFHPSAFVSGFYSCCGRSDENSPGCKKVLDK) form a Btk-type zinc finger. 4 residues coordinate Zn(2+): His870, Cys881, Cys882, and Cys892. Disordered stretches follow at residues 1026-1051 (LNQQHHQQQQHQQQQQQQQQQQLQQF) and 1091-1163 (PFHQ…PPIY). Low complexity predominate over residues 1091 to 1157 (PFHQQQQQHH…APPSTTSSSQ (67 aa)).

As to quaternary structure, interacts with sty. In third instar larvae eye imaginal disk, expressed in cells posterior to the morphogenetic furrow, in all photoreceptor and cone cell precursors as well as in still uncommitted cells.

Its function is as follows. Inhibitory regulator of the Ras-cyclic AMP pathway. May function as a negative regulator of Ras85D/Ras1 in the sev signaling pathway. Acts cell autonomously in cone cell precursors as a negative regulator of R7 photoreceptor cell determination. The sequence is that of GTPase-activating protein (RasGAP1) from Drosophila melanogaster (Fruit fly).